A 374-amino-acid polypeptide reads, in one-letter code: S-adenosylmethionine synthase 2 (374 aa).

Glutamate 11 provides a ligand contact to Mg(2+). Histidine 17 serves as a coordination point for ATP. Position 45 (glutamate 45) interacts with K(+). L-methionine is bound by residues glutamate 58 and glutamine 101. Residues 169-171 (DGK), 237-240 (SGRF), aspartate 248, 254-255 (RK), alanine 271, lysine 275, and lysine 279 contribute to the ATP site. Aspartate 248 lines the L-methionine pocket. An L-methionine-binding site is contributed by lysine 279.

Belongs to the AdoMet synthase family. In terms of assembly, homotetramer. It depends on Mn(2+) as a cofactor. Mg(2+) is required as a cofactor. Requires Co(2+) as cofactor. The cofactor is K(+). Expressed in vegetative and reproductive tissues.

Its subcellular location is the cytoplasm. The enzyme catalyses L-methionine + ATP + H2O = S-adenosyl-L-methionine + phosphate + diphosphate. The protein operates within amino-acid biosynthesis; S-adenosyl-L-methionine biosynthesis; S-adenosyl-L-methionine from L-methionine: step 1/1. In terms of biological role, catalyzes the formation of S-adenosylmethionine from methionine and ATP. The reaction comprises two steps that are both catalyzed by the same enzyme: formation of S-adenosylmethionine (AdoMet) and triphosphate, and subsequent hydrolysis of the triphosphate. This Pisum sativum (Garden pea) protein is S-adenosylmethionine synthase 2 (SAMS2).